The chain runs to 607 residues: UvrABC system protein C (607 aa).

One can recognise a GIY-YIG domain in the interval 16 to 94 (GRPGVYRMFD…IKEWRPPYNI (79 aa)). The 36-residue stretch at 203–238 (NALSEELSASMEKASMALEFERAAELRDQISMLRRV) folds into the UVR domain.

Belongs to the UvrC family. Interacts with UvrB in an incision complex.

Its subcellular location is the cytoplasm. In terms of biological role, the UvrABC repair system catalyzes the recognition and processing of DNA lesions. UvrC both incises the 5' and 3' sides of the lesion. The N-terminal half is responsible for the 3' incision and the C-terminal half is responsible for the 5' incision. In Ectopseudomonas mendocina (strain ymp) (Pseudomonas mendocina), this protein is UvrABC system protein C.